The chain runs to 229 residues: Urease accessory protein UreF (229 aa).

This sequence belongs to the UreF family. As to quaternary structure, ureD, UreF and UreG form a complex that acts as a GTP-hydrolysis-dependent molecular chaperone, activating the urease apoprotein by helping to assemble the nickel containing metallocenter of UreC. The UreE protein probably delivers the nickel.

It localises to the cytoplasm. Functionally, required for maturation of urease via the functional incorporation of the urease nickel metallocenter. The protein is Urease accessory protein UreF of Nostoc sp. (strain PCC 7120 / SAG 25.82 / UTEX 2576).